We begin with the raw amino-acid sequence, 162 residues long: Protein-export protein SecB (162 aa).

This sequence belongs to the SecB family. In terms of assembly, homotetramer, a dimer of dimers. One homotetramer interacts with 1 SecA dimer.

Its subcellular location is the cytoplasm. One of the proteins required for the normal export of preproteins out of the cell cytoplasm. It is a molecular chaperone that binds to a subset of precursor proteins, maintaining them in a translocation-competent state. It also specifically binds to its receptor SecA. This Legionella pneumophila subsp. pneumophila (strain Philadelphia 1 / ATCC 33152 / DSM 7513) protein is Protein-export protein SecB.